Reading from the N-terminus, the 423-residue chain is Gamma-glutamyl phosphate reductase (423 aa).

It belongs to the gamma-glutamyl phosphate reductase family.

Its subcellular location is the cytoplasm. The enzyme catalyses L-glutamate 5-semialdehyde + phosphate + NADP(+) = L-glutamyl 5-phosphate + NADPH + H(+). It functions in the pathway amino-acid biosynthesis; L-proline biosynthesis; L-glutamate 5-semialdehyde from L-glutamate: step 2/2. Functionally, catalyzes the NADPH-dependent reduction of L-glutamate 5-phosphate into L-glutamate 5-semialdehyde and phosphate. The product spontaneously undergoes cyclization to form 1-pyrroline-5-carboxylate. The chain is Gamma-glutamyl phosphate reductase from Brucella suis (strain ATCC 23445 / NCTC 10510).